Here is a 215-residue protein sequence, read N- to C-terminus: Cytochrome b6 (215 aa).

Residues 32–52 traverse the membrane as a helical segment; the sequence is VFYCFGGMTLTCFLVQLATGF. Heme c is bound at residue cysteine 35. The heme b site is built by histidine 86 and histidine 100. Transmembrane regions (helical) follow at residues 90–110, 116–136, and 186–206; these read ASMM…TGGF, LTWI…VTGY, and LHTL…FLMI. 2 residues coordinate heme b: histidine 187 and histidine 202.

This sequence belongs to the cytochrome b family. PetB subfamily. In terms of assembly, the 4 large subunits of the cytochrome b6-f complex are cytochrome b6, subunit IV (17 kDa polypeptide, PetD), cytochrome f and the Rieske protein, while the 4 small subunits are PetG, PetL, PetM and PetN. The complex functions as a dimer. Heme b is required as a cofactor. Heme c serves as cofactor.

It localises to the plastid. The protein localises to the chloroplast thylakoid membrane. Component of the cytochrome b6-f complex, which mediates electron transfer between photosystem II (PSII) and photosystem I (PSI), cyclic electron flow around PSI, and state transitions. This Cyanidium caldarium (Red alga) protein is Cytochrome b6.